The primary structure comprises 210 residues: MTIKNHNYHMTRFITSAPDIRHLPQDMGIEVAFAGRSNAGKSSALNALTKQKSLARTSKTPGRTQLINLFEVEEGIRLVDLPGYGYAEVPEEMKRKWQKALGEYLQKRECLIGLVVLMDIRHPLKDLDQQMIQWAVAMQVPVMVLLTKADKLASGARKSQLNKVRDALLALNGDIQVEYFSVPKKIGIDKLHQKLDIWFSQKAVQVENHR.

One can recognise an EngB-type G domain in the interval 27–201; sequence MGIEVAFAGR…HQKLDIWFSQ (175 aa). Residues 35-42, 62-66, 80-83, 147-150, and 180-182 each bind GTP; these read GRSNAGKS, GRTQL, DLPG, TKAD, and FSV. Positions 42 and 64 each coordinate Mg(2+).

This sequence belongs to the TRAFAC class TrmE-Era-EngA-EngB-Septin-like GTPase superfamily. EngB GTPase family. The cofactor is Mg(2+).

Functionally, necessary for normal cell division and for the maintenance of normal septation. This Photorhabdus laumondii subsp. laumondii (strain DSM 15139 / CIP 105565 / TT01) (Photorhabdus luminescens subsp. laumondii) protein is Probable GTP-binding protein EngB.